Reading from the N-terminus, the 408-residue chain is Elongation factor Tu, chloroplastic (408 aa).

Residues 10–213 form the tr-type G domain; the sequence is KPHVNIGTIG…KVDEYIPTPE (204 aa). Residues 19–26 are G1; the sequence is GHVDHGKT. 19 to 26 contributes to the GTP binding site; that stretch reads GHVDHGKT. Thr-26 serves as a coordination point for Mg(2+). Residues 59 to 63 form a G2 region; sequence GITIN. The G3 stretch occupies residues 80–83; it reads DCPG. GTP-binding positions include 80-84 and 135-138; these read DCPGH and NKAD. The segment at 135–138 is G4; it reads NKAD. Positions 173-175 are G5; it reads SAL.

This sequence belongs to the TRAFAC class translation factor GTPase superfamily. Classic translation factor GTPase family. EF-Tu/EF-1A subfamily.

It is found in the plastid. The protein localises to the chloroplast. The catalysed reaction is GTP + H2O = GDP + phosphate + H(+). Its function is as follows. GTP hydrolase that promotes the GTP-dependent binding of aminoacyl-tRNA to the A-site of ribosomes during protein biosynthesis. In Guillardia theta (Cryptophyte), this protein is Elongation factor Tu, chloroplastic (tufA).